A 367-amino-acid chain; its full sequence is Dihydroxyacetone phosphate transaminase Cj1437c (367 aa).

Position 219 is an N6-(pyridoxal phosphate)lysine (lysine 219).

It belongs to the class-II pyridoxal-phosphate-dependent aminotransferase family. Pyridoxal 5'-phosphate serves as cofactor.

It catalyses the reaction dihydroxyacetone phosphate + L-glutamate = (S)-serinol phosphate + 2-oxoglutarate. Its pathway is capsule biogenesis; capsule polysaccharide biosynthesis. Pyridoxal phosphate (PLP)-dependent transaminase involved in the biosynthesis of amidated D-glucuronic acid structures found on the capsular polysaccharide (CPS) of C.jejuni. Catalyzes the transamination of dihydroxyacetone phosphate (DHAP) to (S)-serinol phosphate in the presence of L-glutamate. Less active with L-aspartate. No activity with dihydroxyacetone or L-alanine. The polypeptide is Dihydroxyacetone phosphate transaminase Cj1437c (Campylobacter jejuni subsp. jejuni serotype O:2 (strain ATCC 700819 / NCTC 11168)).